Here is a 460-residue protein sequence, read N- to C-terminus: Bifunctional protein GlmU (460 aa).

Residues 1-229 (MTNYAIILAA…FNESLGVNDR (229 aa)) are pyrophosphorylase. UDP-N-acetyl-alpha-D-glucosamine-binding positions include 8-11 (LAAG), Lys22, Gln72, and 77-78 (GT). Mg(2+) is bound at residue Asp102. 4 residues coordinate UDP-N-acetyl-alpha-D-glucosamine: Gly139, Glu154, Asn169, and Asn227. Asn227 contacts Mg(2+). A linker region spans residues 230–250 (VALATAETVMRQRITQKHMVN). Residues 251 to 460 (GVTFQNPETV…RLAHHPSRSK (210 aa)) form an N-acetyltransferase region. The UDP-N-acetyl-alpha-D-glucosamine site is built by Arg332 and Lys350. The active-site Proton acceptor is His362. 2 residues coordinate UDP-N-acetyl-alpha-D-glucosamine: Tyr365 and Asn376. Acetyl-CoA contacts are provided by residues Ala379, 385–386 (NY), Ser404, Ala422, and Arg439.

This sequence in the N-terminal section; belongs to the N-acetylglucosamine-1-phosphate uridyltransferase family. In the C-terminal section; belongs to the transferase hexapeptide repeat family. In terms of assembly, homotrimer. The cofactor is Mg(2+).

It is found in the cytoplasm. It catalyses the reaction alpha-D-glucosamine 1-phosphate + acetyl-CoA = N-acetyl-alpha-D-glucosamine 1-phosphate + CoA + H(+). The catalysed reaction is N-acetyl-alpha-D-glucosamine 1-phosphate + UTP + H(+) = UDP-N-acetyl-alpha-D-glucosamine + diphosphate. Its pathway is nucleotide-sugar biosynthesis; UDP-N-acetyl-alpha-D-glucosamine biosynthesis; N-acetyl-alpha-D-glucosamine 1-phosphate from alpha-D-glucosamine 6-phosphate (route II): step 2/2. The protein operates within nucleotide-sugar biosynthesis; UDP-N-acetyl-alpha-D-glucosamine biosynthesis; UDP-N-acetyl-alpha-D-glucosamine from N-acetyl-alpha-D-glucosamine 1-phosphate: step 1/1. It functions in the pathway bacterial outer membrane biogenesis; LPS lipid A biosynthesis. Functionally, catalyzes the last two sequential reactions in the de novo biosynthetic pathway for UDP-N-acetylglucosamine (UDP-GlcNAc). The C-terminal domain catalyzes the transfer of acetyl group from acetyl coenzyme A to glucosamine-1-phosphate (GlcN-1-P) to produce N-acetylglucosamine-1-phosphate (GlcNAc-1-P), which is converted into UDP-GlcNAc by the transfer of uridine 5-monophosphate (from uridine 5-triphosphate), a reaction catalyzed by the N-terminal domain. The chain is Bifunctional protein GlmU from Streptococcus pyogenes serotype M18 (strain MGAS8232).